Consider the following 111-residue polypeptide: Probable 4-amino-4-deoxy-L-arabinose-phosphoundecaprenol flippase subunit ArnE (111 aa).

Over 1-37 (MIWLTLVFASLLSVAGQLCQKQATCFVAINKRRKHIA) the chain is Cytoplasmic. The chain crosses the membrane as a helical span at residues 38-58 (LWLGLALACLGLAMVLWLLVL). The EamA domain occupies 40 to 109 (LGLALACLGL…IIGGIVILGS (70 aa)). The Periplasmic portion of the chain corresponds to 59–60 (QN). Residues 61–81 (VPVGIAYPMLSLNFVWVTLAA) traverse the membrane as a helical segment. Topologically, residues 82 to 87 (VKLWHE) are cytoplasmic. Residues 88–108 (PVSPRHWCGVAFIIGGIVILG) traverse the membrane as a helical segment. Topologically, residues 109–111 (STV) are periplasmic.

This sequence belongs to the ArnE family. As to quaternary structure, heterodimer of ArnE and ArnF.

It is found in the cell inner membrane. It participates in bacterial outer membrane biogenesis; lipopolysaccharide biosynthesis. Functionally, translocates 4-amino-4-deoxy-L-arabinose-phosphoundecaprenol (alpha-L-Ara4N-phosphoundecaprenol) from the cytoplasmic to the periplasmic side of the inner membrane. The chain is Probable 4-amino-4-deoxy-L-arabinose-phosphoundecaprenol flippase subunit ArnE from Escherichia coli (strain 55989 / EAEC).